The primary structure comprises 954 residues: Leucine--tRNA ligase (954 aa).

Positions 67–78 match the 'HIGH' region motif; that stretch reads PYPSGAGLHVGH. The short motif at 729 to 733 is the 'KMSKS' region element; sequence KMGKS. Lys-732 contacts ATP.

Belongs to the class-I aminoacyl-tRNA synthetase family.

It is found in the cytoplasm. It catalyses the reaction tRNA(Leu) + L-leucine + ATP = L-leucyl-tRNA(Leu) + AMP + diphosphate. The sequence is that of Leucine--tRNA ligase from Salinispora tropica (strain ATCC BAA-916 / DSM 44818 / JCM 13857 / NBRC 105044 / CNB-440).